The primary structure comprises 152 residues: Aspartate 1-decarboxylase (152 aa).

The active-site Schiff-base intermediate with substrate; via pyruvic acid is Ser-24. Position 24 is a pyruvic acid (Ser) (Ser-24). Thr-56 lines the substrate pocket. The active-site Proton donor is the Tyr-57. 72–74 (GAA) provides a ligand contact to substrate.

The protein belongs to the PanD family. In terms of assembly, heterooctamer of four alpha and four beta subunits. The cofactor is pyruvate. In terms of processing, is synthesized initially as an inactive proenzyme, which is activated by self-cleavage at a specific serine bond to produce a beta-subunit with a hydroxyl group at its C-terminus and an alpha-subunit with a pyruvoyl group at its N-terminus.

It is found in the cytoplasm. It catalyses the reaction L-aspartate + H(+) = beta-alanine + CO2. Its pathway is cofactor biosynthesis; (R)-pantothenate biosynthesis; beta-alanine from L-aspartate: step 1/1. Its function is as follows. Catalyzes the pyruvoyl-dependent decarboxylation of aspartate to produce beta-alanine. This chain is Aspartate 1-decarboxylase, found in Methylobacterium nodulans (strain LMG 21967 / CNCM I-2342 / ORS 2060).